Here is a 223-residue protein sequence, read N- to C-terminus: HTH-type transcriptional dual regulator CecR (223 aa).

Positions 11–70 constitute an HTH tetR-type domain; that stretch reads EQAKKQLIAAALAQFGEYGMNATTREIAAQAGQNIAAITYYFGSKEDLYLACAQWIADFI. The segment at residues 33-52 is a DNA-binding region (H-T-H motif); it reads TTREIAAQAGQNIAAITYYF.

Its subcellular location is the cytoplasm. Functionally, regulates transcription of the cecR-ybhGFSR operon and the rhlE gene, which altogether are involved in the control of sensitivity to cefoperazone and chloramphenicol. Represses the cecR-ybhGFSR operon and activates the rhlE operon. Acts by binding to a palindromic sequence within the intergenic spacer located between these two divergently transcribed operons. This chain is HTH-type transcriptional dual regulator CecR, found in Shigella flexneri.